Here is a 402-residue protein sequence, read N- to C-terminus: S-adenosylmethionine synthase (402 aa).

His15 serves as a coordination point for ATP. Residue Asp17 coordinates Mg(2+). Glu43 contacts K(+). Glu56 and Gln99 together coordinate L-methionine. The flexible loop stretch occupies residues 99–109; sequence QSPDIAQGVDT. ATP-binding positions include 174-176, 247-248, Asp256, 262-263, Ala279, and Lys283; these read DGK, RF, and RK. Asp256 contributes to the L-methionine binding site. Residue Lys287 coordinates L-methionine.

The protein belongs to the AdoMet synthase family. Homotetramer; dimer of dimers. It depends on Mg(2+) as a cofactor. K(+) is required as a cofactor.

The protein localises to the cytoplasm. The enzyme catalyses L-methionine + ATP + H2O = S-adenosyl-L-methionine + phosphate + diphosphate. It participates in amino-acid biosynthesis; S-adenosyl-L-methionine biosynthesis; S-adenosyl-L-methionine from L-methionine: step 1/1. Its function is as follows. Catalyzes the formation of S-adenosylmethionine (AdoMet) from methionine and ATP. The overall synthetic reaction is composed of two sequential steps, AdoMet formation and the subsequent tripolyphosphate hydrolysis which occurs prior to release of AdoMet from the enzyme. The sequence is that of S-adenosylmethionine synthase from Streptomyces avermitilis (strain ATCC 31267 / DSM 46492 / JCM 5070 / NBRC 14893 / NCIMB 12804 / NRRL 8165 / MA-4680).